Here is a 295-residue protein sequence, read N- to C-terminus: Pantothenate synthetase (295 aa).

29 to 36 (MGALHSGH) serves as a coordination point for ATP. Histidine 36 serves as the catalytic Proton donor. (R)-pantoate is bound at residue glutamine 60. Glutamine 60 lines the beta-alanine pocket. Residue 158–161 (GQKD) participates in ATP binding. Glutamine 164 is a binding site for (R)-pantoate. ATP contacts are provided by residues valine 187 and 195–198 (LSSR).

Belongs to the pantothenate synthetase family. Homodimer.

The protein resides in the cytoplasm. It carries out the reaction (R)-pantoate + beta-alanine + ATP = (R)-pantothenate + AMP + diphosphate + H(+). It participates in cofactor biosynthesis; (R)-pantothenate biosynthesis; (R)-pantothenate from (R)-pantoate and beta-alanine: step 1/1. Its function is as follows. Catalyzes the condensation of pantoate with beta-alanine in an ATP-dependent reaction via a pantoyl-adenylate intermediate. In Paenarthrobacter aurescens (strain TC1), this protein is Pantothenate synthetase.